The following is a 329-amino-acid chain: Ornithine carbamoyltransferase (329 aa).

Carbamoyl phosphate-binding positions include 51–54 (STRT), Gln-78, Arg-102, and 129–132 (HPVQ). L-ornithine contacts are provided by residues Asn-174, Asp-238, and 242-243 (SM). Residues 278-279 (CL) and Arg-306 each bind carbamoyl phosphate.

This sequence belongs to the aspartate/ornithine carbamoyltransferase superfamily. OTCase family.

It is found in the cytoplasm. It catalyses the reaction carbamoyl phosphate + L-ornithine = L-citrulline + phosphate + H(+). It functions in the pathway amino-acid biosynthesis; L-arginine biosynthesis; L-arginine from L-ornithine and carbamoyl phosphate: step 1/3. Functionally, reversibly catalyzes the transfer of the carbamoyl group from carbamoyl phosphate (CP) to the N(epsilon) atom of ornithine (ORN) to produce L-citrulline. The chain is Ornithine carbamoyltransferase from Helicobacter hepaticus (strain ATCC 51449 / 3B1).